Reading from the N-terminus, the 439-residue chain is Nuclear distribution protein PAC1 (439 aa).

A coiled-coil region spans residues 55–90; that stretch reads NSIVRLQSKIMELEKNCEELQKSIDEQQSSTNQISN. WD repeat units follow at residues 106–145, 149–193, 199–240, 243–282, 295–335, 355–392, and 402–438; these read TLDA…LPLQ, AHMD…TLSH, GHEH…CIKS, PHTQ…SMGI, IPDP…FIPH, DHNS…LSTT, and NKGF…TSFM.

It belongs to the WD repeat LIS1/nudF family. In terms of assembly, self-associates. Interacts with NDL1 and dynein.

Its subcellular location is the cytoplasm. It is found in the cytoskeleton. The protein localises to the spindle pole. Positively regulates the activity of the minus-end directed microtubule motor protein dynein. Plays a central role in positioning the mitotic spindle at the bud neck during cell division. Targets cytoplasmic dynein to microtubule plus ends, thereby promoting dynein-mediated microtubule sliding along the bud cortex and consequently the movement of the mitotic spindle to the bud neck. In Kluyveromyces lactis (strain ATCC 8585 / CBS 2359 / DSM 70799 / NBRC 1267 / NRRL Y-1140 / WM37) (Yeast), this protein is Nuclear distribution protein PAC1.